The primary structure comprises 288 residues: Fe-S cluster assembly protein dre2 (288 aa).

The N-terminal SAM-like domain stretch occupies residues 1–127; the sequence is MSSSVLVLTS…LSRPNQVEAV (127 aa). A linker region spans residues 128–177; that stretch reads PIKLSNKNGQSASKNKILDFLKSDKENLISGDDDQELIDEDELLDESAHD. 4 residues coordinate [2Fe-2S] cluster: Cys-185, Cys-196, Cys-199, and Cys-201. The segment at 185–201 is fe-S binding site A; that stretch reads CKPEPGKKKRACKNCTC. Positions 244, 247, 255, and 258 each coordinate [4Fe-4S] cluster. 2 short sequence motifs (cx2C motif) span residues 244–247 and 255–258; these read CGNC and CSGC. Residues 244 to 258 form a fe-S binding site B region; it reads CGNCYLGDAFRCSGC.

It belongs to the anamorsin family. Monomer. Interacts with tah18. Interacts with tim40. [2Fe-2S] cluster is required as a cofactor. [4Fe-4S] cluster serves as cofactor.

It localises to the cytoplasm. It is found in the mitochondrion intermembrane space. Functionally, component of the cytosolic iron-sulfur (Fe-S) protein assembly (CIA) machinery required for the maturation of extramitochondrial Fe-S proteins. Part of an electron transfer chain functioning in an early step of cytosolic Fe-S biogenesis, facilitating the de novo assembly of a [4Fe-4S] cluster on the scaffold complex cfd1-nbp35. Electrons are transferred to dre2 from NADPH via the FAD- and FMN-containing protein tah18. Tah18-dre2 are also required for the assembly of the diferric tyrosyl radical cofactor of ribonucleotide reductase (RNR), probably by providing electrons for reduction during radical cofactor maturation in the catalytic small subunit suc22. The chain is Fe-S cluster assembly protein dre2 from Schizosaccharomyces pombe (strain 972 / ATCC 24843) (Fission yeast).